The following is a 250-amino-acid chain: 2,3-bisphosphoglycerate-dependent phosphoglycerate mutase (250 aa).

Substrate-binding positions include 10–17, 23–24, R62, 89–92, K100, 116–117, and 185–186; these read RHGESVWN, TG, ERHY, RR, and GN. The active-site Tele-phosphohistidine intermediate is H11. The active-site Proton donor/acceptor is E89.

It belongs to the phosphoglycerate mutase family. BPG-dependent PGAM subfamily. As to quaternary structure, homodimer.

The enzyme catalyses (2R)-2-phosphoglycerate = (2R)-3-phosphoglycerate. Its pathway is carbohydrate degradation; glycolysis; pyruvate from D-glyceraldehyde 3-phosphate: step 3/5. Catalyzes the interconversion of 2-phosphoglycerate and 3-phosphoglycerate. This chain is 2,3-bisphosphoglycerate-dependent phosphoglycerate mutase, found in Proteus mirabilis (strain HI4320).